We begin with the raw amino-acid sequence, 392 residues long: NADH-quinone oxidoreductase subunit D (392 aa).

It belongs to the complex I 49 kDa subunit family. As to quaternary structure, NDH-1 is composed of 14 different subunits. Subunits NuoB, C, D, E, F, and G constitute the peripheral sector of the complex.

The protein resides in the cell inner membrane. The enzyme catalyses a quinone + NADH + 5 H(+)(in) = a quinol + NAD(+) + 4 H(+)(out). In terms of biological role, NDH-1 shuttles electrons from NADH, via FMN and iron-sulfur (Fe-S) centers, to quinones in the respiratory chain. The immediate electron acceptor for the enzyme in this species is believed to be ubiquinone. Couples the redox reaction to proton translocation (for every two electrons transferred, four hydrogen ions are translocated across the cytoplasmic membrane), and thus conserves the redox energy in a proton gradient. The protein is NADH-quinone oxidoreductase subunit D of Paramagnetospirillum magneticum (strain ATCC 700264 / AMB-1) (Magnetospirillum magneticum).